A 179-amino-acid chain; its full sequence is Large ribosomal subunit protein uL6 (179 aa).

It belongs to the universal ribosomal protein uL6 family. As to quaternary structure, part of the 50S ribosomal subunit.

In terms of biological role, this protein binds to the 23S rRNA, and is important in its secondary structure. It is located near the subunit interface in the base of the L7/L12 stalk, and near the tRNA binding site of the peptidyltransferase center. In Saccharopolyspora erythraea (strain ATCC 11635 / DSM 40517 / JCM 4748 / NBRC 13426 / NCIMB 8594 / NRRL 2338), this protein is Large ribosomal subunit protein uL6.